The following is a 160-amino-acid chain: Cytochrome c-type biogenesis protein CcmE (160 aa).

The Cytoplasmic portion of the chain corresponds to 1–8 (MSAPRKTR). A helical; Signal-anchor for type II membrane protein transmembrane segment spans residues 9 to 29 (LYAILAVVCGAVLTIALMLYA). Topologically, residues 30 to 160 (LSSNIDLFYT…PAAGPEGKRL (131 aa)) are periplasmic. Heme is bound by residues histidine 130 and tyrosine 134.

This sequence belongs to the CcmE/CycJ family.

Its subcellular location is the cell inner membrane. In terms of biological role, heme chaperone required for the biogenesis of c-type cytochromes. Transiently binds heme delivered by CcmC and transfers the heme to apo-cytochromes in a process facilitated by CcmF and CcmH. The polypeptide is Cytochrome c-type biogenesis protein CcmE (Pectobacterium atrosepticum (strain SCRI 1043 / ATCC BAA-672) (Erwinia carotovora subsp. atroseptica)).